A 143-amino-acid polypeptide reads, in one-letter code: Putative pre-16S rRNA nuclease (143 aa).

It belongs to the YqgF nuclease family.

The protein resides in the cytoplasm. Could be a nuclease involved in processing of the 5'-end of pre-16S rRNA. The sequence is that of Putative pre-16S rRNA nuclease from Marinobacter nauticus (strain ATCC 700491 / DSM 11845 / VT8) (Marinobacter aquaeolei).